The following is a 129-amino-acid chain: Profilin-4 (129 aa).

It belongs to the profilin family.

It is found in the cytoplasm. Involved in male fertility. Required for manchette development and acrosome biogenesis during spermiogenesis. Binds in vitro to phospholipids, including phosphatidylinositol 3-phosphate (PtdIns(3)P), phosphatidylinositol 4,5-bisphosphate (PtdIns(4,5)P2), phosphatidylinositol 4-phosphate (PtdIns(4)P) and phosphatidic acid (PA). Contrary to other profilin family members, does not bind to actin in vitro. In Bos taurus (Bovine), this protein is Profilin-4 (PFN4).